A 101-amino-acid chain; its full sequence is Small ribosomal subunit protein uS14 (101 aa).

This sequence belongs to the universal ribosomal protein uS14 family. Part of the 30S ribosomal subunit. Contacts proteins S3 and S10.

Its function is as follows. Binds 16S rRNA, required for the assembly of 30S particles and may also be responsible for determining the conformation of the 16S rRNA at the A site. The sequence is that of Small ribosomal subunit protein uS14 from Polynucleobacter asymbioticus (strain DSM 18221 / CIP 109841 / QLW-P1DMWA-1) (Polynucleobacter necessarius subsp. asymbioticus).